We begin with the raw amino-acid sequence, 501 residues long: Calcium-dependent protein kinase 4 (501 aa).

A Protein kinase domain is found at 25 to 283; the sequence is YLLGKKLGQG…AHEALCHPWI (259 aa). ATP-binding positions include 31 to 39 and Lys54; that span reads LGQGQFGTT. Asp149 functions as the Proton acceptor in the catalytic mechanism. Ser189 carries the phosphoserine modification. The interval 289–319 is autoinhibitory domain; it reads APDKPLDPAVLSRLKQFSQMNKIKKMALRVI. 4 consecutive EF-hand domains span residues 326 to 361, 362 to 397, 398 to 433, and 437 to 467; these read EEIGGLKELFKMIDTDNSGTITFEELKAGLKRVGSE, LMESEIKSLMDAADIDNSGTIDYGEFLAATLHINKM, EREENLVVAFSYFDKDGSGYITIDELQQACTEFGLC, and LDDMIKEIDLDNDGKIDFSEFTAMMKKGDGV. 20 residues coordinate Ca(2+): Asp339, Asp341, Ser343, Thr345, Glu350, Asp375, Asp377, Ser379, Thr381, Glu386, Asp411, Asp413, Ser415, Tyr417, Glu422, Asp445, Asp447, Asp449, Lys451, and Glu456.

Belongs to the protein kinase superfamily. Ser/Thr protein kinase family. CDPK subfamily. Interacts with Di19.

The protein resides in the cytoplasm. Its subcellular location is the nucleus. The enzyme catalyses L-seryl-[protein] + ATP = O-phospho-L-seryl-[protein] + ADP + H(+). It carries out the reaction L-threonyl-[protein] + ATP = O-phospho-L-threonyl-[protein] + ADP + H(+). Activated by calcium. Autophosphorylation may play an important role in the regulation of the kinase activity. Its function is as follows. May play a role in signal transduction pathways that involve calcium as a second messenger. Functions as a regulator of the calcium-mediated abscisic acid (ABA) signaling pathway. Phosphorylates ABA-responsive transcription factors ABF1 and ABF4 in vitro. Phosphorylates the nuclear zinc finger Di19 in vitro. The chain is Calcium-dependent protein kinase 4 (CPK4) from Arabidopsis thaliana (Mouse-ear cress).